The primary structure comprises 209 residues: Small ribosomal subunit protein uS3 (209 aa).

A KH type-2 domain is found at Ile-17–Lys-86.

The protein belongs to the universal ribosomal protein uS3 family. In terms of assembly, part of the 30S ribosomal subunit.

Functionally, binds the lower part of the 30S subunit head. This is Small ribosomal subunit protein uS3 from Thermococcus gammatolerans (strain DSM 15229 / JCM 11827 / EJ3).